The sequence spans 209 residues: Guanylate kinase (209 aa).

One can recognise a Guanylate kinase-like domain in the interval 7 to 185; that stretch reads GNLYIVAAPS…AAMELQSIVI (179 aa). 14-21 lines the ATP pocket; it reads APSGGGKT.

Belongs to the guanylate kinase family.

The protein resides in the cytoplasm. It catalyses the reaction GMP + ATP = GDP + ADP. Functionally, essential for recycling GMP and indirectly, cGMP. This Legionella pneumophila (strain Paris) protein is Guanylate kinase.